A 201-amino-acid chain; its full sequence is Probable nicotinate-nucleotide adenylyltransferase (201 aa).

It belongs to the NadD family.

The catalysed reaction is nicotinate beta-D-ribonucleotide + ATP + H(+) = deamido-NAD(+) + diphosphate. It functions in the pathway cofactor biosynthesis; NAD(+) biosynthesis; deamido-NAD(+) from nicotinate D-ribonucleotide: step 1/1. Functionally, catalyzes the reversible adenylation of nicotinate mononucleotide (NaMN) to nicotinic acid adenine dinucleotide (NaAD). The polypeptide is Probable nicotinate-nucleotide adenylyltransferase (Clostridium botulinum (strain ATCC 19397 / Type A)).